The sequence spans 116 residues: Putative anti-sigma factor antagonist BtrV (116 aa).

An STAS domain is found at 1–110; sequence MKLTMDKIDG…NSREAAAAAF (110 aa). At Ser-55 the chain carries Phosphoserine; by BtrW.

It belongs to the anti-sigma-factor antagonist family. As to quaternary structure, interacts with BtrW. Post-translationally, phosphorylated by BtrW. Dephosphorylated by BtrU.

Its function is as follows. Possible positive regulator of sigma-B activity. Non-phosphorylated BtrV binds to BtrW, preventing its association with an unknown partner(s) that might be sigma-B. When phosphorylated, releases BtrW, which is then free to complex with and inactivate its partner. Involved in type III secretion system (T3SS). The polypeptide is Putative anti-sigma factor antagonist BtrV (btrV) (Bordetella bronchiseptica (strain ATCC BAA-588 / NCTC 13252 / RB50) (Alcaligenes bronchisepticus)).